Consider the following 365-residue polypeptide: Fructose-1,6-bisphosphatase class 1 2 (365 aa).

Mg(2+) is bound by residues Glu100, Asp122, Leu124, and Asp125. Substrate-binding positions include 125-128 (DGSS) and Asn221. Glu293 serves as a coordination point for Mg(2+).

This sequence belongs to the FBPase class 1 family. Homotetramer. It depends on Mg(2+) as a cofactor.

Its subcellular location is the cytoplasm. It catalyses the reaction beta-D-fructose 1,6-bisphosphate + H2O = beta-D-fructose 6-phosphate + phosphate. Its pathway is carbohydrate biosynthesis; gluconeogenesis. This Leptothrix cholodnii (strain ATCC 51168 / LMG 8142 / SP-6) (Leptothrix discophora (strain SP-6)) protein is Fructose-1,6-bisphosphatase class 1 2.